We begin with the raw amino-acid sequence, 106 residues long: UPF0213 protein KPN78578_35340 (106 aa).

Positions Val-13 to Arg-88 constitute a GIY-YIG domain.

Belongs to the UPF0213 family.

This is UPF0213 protein KPN78578_35340 from Klebsiella pneumoniae subsp. pneumoniae (strain ATCC 700721 / MGH 78578).